A 545-amino-acid chain; its full sequence is Chaperonin GroEL (545 aa).

ATP contacts are provided by residues 29-32, K50, 86-90, G415, and D495; these read TLGP and DGTTT.

This sequence belongs to the chaperonin (HSP60) family. In terms of assembly, forms a cylinder of 14 subunits composed of two heptameric rings stacked back-to-back. Interacts with the co-chaperonin GroES.

It is found in the cytoplasm. It catalyses the reaction ATP + H2O + a folded polypeptide = ADP + phosphate + an unfolded polypeptide.. Together with its co-chaperonin GroES, plays an essential role in assisting protein folding. The GroEL-GroES system forms a nano-cage that allows encapsulation of the non-native substrate proteins and provides a physical environment optimized to promote and accelerate protein folding. The polypeptide is Chaperonin GroEL (Bacteroides thetaiotaomicron (strain ATCC 29148 / DSM 2079 / JCM 5827 / CCUG 10774 / NCTC 10582 / VPI-5482 / E50)).